The following is a 390-amino-acid chain: Putative glutamate--cysteine ligase 2 (390 aa).

Belongs to the glutamate--cysteine ligase type 2 family. YbdK subfamily.

The enzyme catalyses L-cysteine + L-glutamate + ATP = gamma-L-glutamyl-L-cysteine + ADP + phosphate + H(+). Its function is as follows. ATP-dependent carboxylate-amine ligase which exhibits weak glutamate--cysteine ligase activity. The polypeptide is Putative glutamate--cysteine ligase 2 (Chloroflexus aggregans (strain MD-66 / DSM 9485)).